Here is a 54-residue protein sequence, read N- to C-terminus: Conotoxin Cal6.17 (54 aa).

The N-terminal stretch at 1–19 (MSGTGVLLLTLLLLVTMAT) is a signal peptide. 3 cysteine pairs are disulfide-bonded: C24–C39, C32–C49, and C38–C53.

Expressed by the venom duct.

The protein resides in the secreted. Functionally, probable neurotoxin. The sequence is that of Conotoxin Cal6.17 from Californiconus californicus (California cone).